A 451-amino-acid polypeptide reads, in one-letter code: Alpha-galactosidase (451 aa).

5–71 serves as a coordination point for NAD(+); it reads PKITFIGAGS…ASGKITCHTQ (67 aa). Asn-151 provides a ligand contact to substrate. Position 173 (Cys-173) interacts with Mn(2+). His-174 serves as the catalytic Proton donor. His-203 contributes to the Mn(2+) binding site. Arg-287 lines the substrate pocket.

The protein belongs to the glycosyl hydrolase 4 family. As to quaternary structure, homodimer. NAD(+) serves as cofactor. Requires Mn(2+) as cofactor.

It catalyses the reaction Hydrolysis of terminal, non-reducing alpha-D-galactose residues in alpha-D-galactosides, including galactose oligosaccharides, galactomannans and galactolipids.. The sequence is that of Alpha-galactosidase (melA) from Escherichia coli (strain K12).